The sequence spans 138 residues: Large ribosomal subunit protein uL16 (138 aa).

Residues 1 to 13 show a composition bias toward basic residues; it reads MLQPSRRKYRKEQ. A disordered region spans residues 1–22; it reads MLQPSRRKYRKEQKGRNTGLAT.

This sequence belongs to the universal ribosomal protein uL16 family. Part of the 50S ribosomal subunit.

In terms of biological role, binds 23S rRNA and is also seen to make contacts with the A and possibly P site tRNAs. The sequence is that of Large ribosomal subunit protein uL16 from Bordetella petrii (strain ATCC BAA-461 / DSM 12804 / CCUG 43448).